A 341-amino-acid chain; its full sequence is UDP-3-O-acylglucosamine N-acyltransferase (341 aa).

Residue H242 is the Proton acceptor of the active site.

The protein belongs to the transferase hexapeptide repeat family. LpxD subfamily. In terms of assembly, homotrimer.

The catalysed reaction is a UDP-3-O-[(3R)-3-hydroxyacyl]-alpha-D-glucosamine + a (3R)-hydroxyacyl-[ACP] = a UDP-2-N,3-O-bis[(3R)-3-hydroxyacyl]-alpha-D-glucosamine + holo-[ACP] + H(+). Its pathway is bacterial outer membrane biogenesis; LPS lipid A biosynthesis. Its function is as follows. Catalyzes the N-acylation of UDP-3-O-acylglucosamine using 3-hydroxyacyl-ACP as the acyl donor. Is involved in the biosynthesis of lipid A, a phosphorylated glycolipid that anchors the lipopolysaccharide to the outer membrane of the cell. The protein is UDP-3-O-acylglucosamine N-acyltransferase of Haemophilus influenzae (strain ATCC 51907 / DSM 11121 / KW20 / Rd).